A 781-amino-acid polypeptide reads, in one-letter code: Chloride channel protein CLC-f (781 aa).

Disordered regions lie at residues 1 to 41 (MSSG…QSPA) and 79 to 98 (RERHNPSSSSAFSAAGEEDG). The span at 10 to 20 (NEDRHLLRSTD) shows a compositional bias: basic and acidic residues. 12 helical membrane passes run 129 to 149 (WALLLIGCLIGVAAGICVAGF), 184 to 204 (ILLIPVTGGVIVGMMHGLLEI), 221 to 241 (FLAGIYPVIKAIQAAVTLGTG), 250 to 270 (SVDIGKSCANGFALMMENNRE), 279 to 299 (GAASGIASGFNAAVAGCFFAI), 314 to 334 (FTTAMIILASVISSTVSNALL), 350 to 370 (AAELPLYLILGMLCGAVSVVF), 388 to 408 (FGLPAIVCPALGGLGAGIIAL), 433 to 453 (APGIWLLAQLAAAKVVATALC), 457 to 477 (GLVGGLYAPSLMIGAAVGAVF), 502 to 522 (ALVGMAATLASMCSVPLTSVL), and 523 to 543 (LLFELTKDYRILLPLMGAVGL). Positions 553–584 (QGKESDSSEGRSTGRGYSSLSPSERKTEGVWR) are disordered. A compositionally biased stretch (basic and acidic residues) spans 575–584 (SERKTEGVWR). CBS domains follow at residues 621–677 (MSKN…NAST) and 699–763 (QERG…EMSR). The chain crosses the membrane as a helical span at residues 726–746 (QLPVVKRGEVIHKGKRRKLLG).

This sequence belongs to the chloride channel (TC 2.A.49) family. In terms of assembly, homodimer.

Its subcellular location is the membrane. Voltage-gated chloride channel. This Arabidopsis thaliana (Mouse-ear cress) protein is Chloride channel protein CLC-f (CLC-F).